The following is a 495-amino-acid chain: ATP-NADH kinase YEF1 (495 aa).

The segment at 442–480 is disordered; it reads KYRLDSSKNGNDTISNPLESSCISSDAQDEERKSVTETE. A compositionally biased stretch (polar residues) spans 448–467; sequence SKNGNDTISNPLESSCISSD.

It belongs to the NAD kinase family. Homooctamer. It depends on Mg(2+) as a cofactor. Mn(2+) is required as a cofactor. Requires Co(2+) as cofactor. The cofactor is Ca(2+).

It carries out the reaction NADH + ATP = ADP + NADPH + H(+). Functionally, ATP-NADH kinase with a low phosphorylation activity of both NADH and NAD(+) to produce NADP and NADPH by using ATP. UTR1 is responsible for essentially all of the NAD/NADH kinase activity resident in the cytoplasm, whereas POS5 is responsible for all mitochondrial NAD/NADH kinase activity and consequent mitochondrial genome maintenance. YEF1 can substitute for UTR1 when overexpressed. The sequence is that of ATP-NADH kinase YEF1 (YEF1) from Saccharomyces cerevisiae (strain ATCC 204508 / S288c) (Baker's yeast).